We begin with the raw amino-acid sequence, 389 residues long: Pyruvylated Gal-beta-1,3-epitope synthesis protein 2 (389 aa).

Over 1–16 (MTKLWVNFFSQKLLRL) the chain is Cytoplasmic. The chain crosses the membrane as a helical span at residues 17–37 (LIPSIIVVFAFAALFAIYSPI). At 38–389 (QLGGINFYKR…WSNSFDLITA (352 aa)) the chain is on the lumenal side.

It localises to the endoplasmic reticulum membrane. The protein localises to the golgi apparatus membrane. Involved in cell wall biogenesis. Has a role in the addition of Gal-beta1,3 moeities to galactomannans and their subsequent pyruvylation. Has a role in meiosis. The chain is Pyruvylated Gal-beta-1,3-epitope synthesis protein 2 (pvg2) from Schizosaccharomyces pombe (strain 972 / ATCC 24843) (Fission yeast).